A 96-amino-acid chain; its full sequence is UPF0235 protein YggU (96 aa).

Belongs to the UPF0235 family.

The protein is UPF0235 protein YggU of Salmonella typhi.